We begin with the raw amino-acid sequence, 247 residues long: tRNA uridine(34) hydroxylase (247 aa).

One can recognise a Rhodanese domain in the interval 124-218 (TKQNVIVIDT…YLEDTQNKNN (95 aa)). Catalysis depends on cysteine 178, which acts as the Cysteine persulfide intermediate.

This sequence belongs to the TrhO family.

It carries out the reaction uridine(34) in tRNA + AH2 + O2 = 5-hydroxyuridine(34) in tRNA + A + H2O. In terms of biological role, catalyzes oxygen-dependent 5-hydroxyuridine (ho5U) modification at position 34 in tRNAs. The sequence is that of tRNA uridine(34) hydroxylase from Rickettsia akari (strain Hartford).